Reading from the N-terminus, the 267-residue chain is Tryptophan synthase alpha chain (267 aa).

Active-site proton acceptor residues include E49 and D60.

This sequence belongs to the TrpA family. As to quaternary structure, tetramer of two alpha and two beta chains.

The enzyme catalyses (1S,2R)-1-C-(indol-3-yl)glycerol 3-phosphate + L-serine = D-glyceraldehyde 3-phosphate + L-tryptophan + H2O. It functions in the pathway amino-acid biosynthesis; L-tryptophan biosynthesis; L-tryptophan from chorismate: step 5/5. Functionally, the alpha subunit is responsible for the aldol cleavage of indoleglycerol phosphate to indole and glyceraldehyde 3-phosphate. This Pelobacter propionicus (strain DSM 2379 / NBRC 103807 / OttBd1) protein is Tryptophan synthase alpha chain.